The sequence spans 399 residues: UDP-N-acetylglucosamine--N-acetylmuramyl-(pentapeptide) pyrophosphoryl-undecaprenol N-acetylglucosamine transferase (399 aa).

UDP-N-acetyl-alpha-D-glucosamine-binding positions include 29–31 (TAG), asparagine 148, arginine 185, serine 219, and glutamine 318.

The protein belongs to the glycosyltransferase 28 family. MurG subfamily.

Its subcellular location is the cell membrane. The catalysed reaction is di-trans,octa-cis-undecaprenyl diphospho-N-acetyl-alpha-D-muramoyl-L-alanyl-D-glutamyl-meso-2,6-diaminopimeloyl-D-alanyl-D-alanine + UDP-N-acetyl-alpha-D-glucosamine = di-trans,octa-cis-undecaprenyl diphospho-[N-acetyl-alpha-D-glucosaminyl-(1-&gt;4)]-N-acetyl-alpha-D-muramoyl-L-alanyl-D-glutamyl-meso-2,6-diaminopimeloyl-D-alanyl-D-alanine + UDP + H(+). The protein operates within cell wall biogenesis; peptidoglycan biosynthesis. Its function is as follows. Cell wall formation. Catalyzes the transfer of a GlcNAc subunit on undecaprenyl-pyrophosphoryl-MurNAc-pentapeptide (lipid intermediate I) to form undecaprenyl-pyrophosphoryl-MurNAc-(pentapeptide)GlcNAc (lipid intermediate II). The protein is UDP-N-acetylglucosamine--N-acetylmuramyl-(pentapeptide) pyrophosphoryl-undecaprenol N-acetylglucosamine transferase of Mycobacterium ulcerans (strain Agy99).